A 57-amino-acid chain; its full sequence is NADH dehydrogenase [ubiquinone] 1 beta subcomplex subunit 1 (57 aa).

The chain crosses the membrane as a helical span at residues 10–26; it reads HWVHVLVPMGFVFGYYL.

The protein belongs to the complex I NDUFB1 subunit family. In terms of assembly, complex I is composed of 45 different subunits.

It is found in the mitochondrion inner membrane. Accessory subunit of the mitochondrial membrane respiratory chain NADH dehydrogenase (Complex I) that is believed not to be involved in catalysis. Complex I functions in the transfer of electrons from NADH to the respiratory chain. The immediate electron acceptor for the enzyme is believed to be ubiquinone. The chain is NADH dehydrogenase [ubiquinone] 1 beta subcomplex subunit 1 (NDUFB1) from Bos taurus (Bovine).